The sequence spans 159 residues: Putative ribosomal RNA large subunit methyltransferase H (159 aa).

S-adenosyl-L-methionine is bound by residues L76, G108, and 127–132 (FSKMTF).

It belongs to the RNA methyltransferase RlmH family.

Its subcellular location is the cytoplasm. The enzyme catalyses pseudouridine(1915) in 23S rRNA + S-adenosyl-L-methionine = N(3)-methylpseudouridine(1915) in 23S rRNA + S-adenosyl-L-homocysteine + H(+). Specifically methylates the pseudouridine at position 1915 (m3Psi1915) in 23S rRNA. The sequence is that of Putative ribosomal RNA large subunit methyltransferase H from Methanococcus vannielii (strain ATCC 35089 / DSM 1224 / JCM 13029 / OCM 148 / SB).